Reading from the N-terminus, the 277-residue chain is Orotidine 5'-phosphate decarboxylase (277 aa).

Lys95 functions as the Proton donor in the catalytic mechanism.

This sequence belongs to the OMP decarboxylase family. Type 2 subfamily.

It catalyses the reaction orotidine 5'-phosphate + H(+) = UMP + CO2. It participates in pyrimidine metabolism; UMP biosynthesis via de novo pathway; UMP from orotate: step 2/2. The sequence is that of Orotidine 5'-phosphate decarboxylase from Mycolicibacterium vanbaalenii (strain DSM 7251 / JCM 13017 / BCRC 16820 / KCTC 9966 / NRRL B-24157 / PYR-1) (Mycobacterium vanbaalenii).